The following is a 155-amino-acid chain: MLKKKKTEVYALGEHISMSADKARRVIDQIRGRSYEETLMILELMPYRACYPILKLVYSAAANASYNMGSSEANLVISKAEVNGGTTVKKLKPRARGRSFPIKRSTCHITIVMKDISLDDEYVEMYSLKKTRWKKKPTAMPYRDMYNSGGLWDKK.

It belongs to the universal ribosomal protein uL22 family. Part of the 50S ribosomal subunit.

The protein localises to the plastid. The protein resides in the chloroplast. In terms of biological role, this protein binds specifically to 23S rRNA. The globular domain of the protein is located near the polypeptide exit tunnel on the outside of the subunit, while an extended beta-hairpin is found that lines the wall of the exit tunnel in the center of the 70S ribosome. This is Large ribosomal subunit protein uL22c (rpl22) from Nicotiana tomentosiformis (Tobacco).